The primary structure comprises 330 residues: Ketol-acid reductoisomerase (NADP(+)) (330 aa).

A KARI N-terminal Rossmann domain is found at 3–184 (LPVYYDKDID…GGGRMGVLET (182 aa)). NADP(+)-binding positions include 26–29 (YGAQ), S52, and S54. Residue H109 is part of the active site. G135 contacts NADP(+). The 145-residue stretch at 185-329 (SFKEECESDL…EILRAPFNHK (145 aa)) folds into the KARI C-terminal knotted domain. The Mg(2+) site is built by D193, E197, E229, and E233. S254 contributes to the substrate binding site.

The protein belongs to the ketol-acid reductoisomerase family. Mg(2+) serves as cofactor.

The catalysed reaction is (2R)-2,3-dihydroxy-3-methylbutanoate + NADP(+) = (2S)-2-acetolactate + NADPH + H(+). It carries out the reaction (2R,3R)-2,3-dihydroxy-3-methylpentanoate + NADP(+) = (S)-2-ethyl-2-hydroxy-3-oxobutanoate + NADPH + H(+). It functions in the pathway amino-acid biosynthesis; L-isoleucine biosynthesis; L-isoleucine from 2-oxobutanoate: step 2/4. It participates in amino-acid biosynthesis; L-valine biosynthesis; L-valine from pyruvate: step 2/4. Functionally, involved in the biosynthesis of branched-chain amino acids (BCAA). Catalyzes an alkyl-migration followed by a ketol-acid reduction of (S)-2-acetolactate (S2AL) to yield (R)-2,3-dihydroxy-isovalerate. In the isomerase reaction, S2AL is rearranged via a Mg-dependent methyl migration to produce 3-hydroxy-3-methyl-2-ketobutyrate (HMKB). In the reductase reaction, this 2-ketoacid undergoes a metal-dependent reduction by NADPH to yield (R)-2,3-dihydroxy-isovalerate. The protein is Ketol-acid reductoisomerase (NADP(+)) of Helicobacter pylori (strain ATCC 700392 / 26695) (Campylobacter pylori).